The following is a 468-amino-acid chain: Alcohol dehydrogenase (quinone), cytochrome c subunit (468 aa).

Residues 1–23 (MINRLKVTFSAAAFSLLAGTALA) form the signal peptide. Cytochrome c domains lie at 31–134 (ALVQ…MHGV), 178–293 (PEIA…KSLP), and 317–407 (TASV…RTSW). Cysteine 45, cysteine 48, histidine 49, cysteine 193, cysteine 196, histidine 197, cysteine 330, cysteine 333, and histidine 334 together coordinate heme c.

As to quaternary structure, the alcohol dehydrogenase multicomponent enzyme system is composed of a dehydrogenase subunit I (AdhA) and a cytochrome c subunit II (AdhB). Heme c is required as a cofactor.

The protein localises to the cell membrane. It carries out the reaction ethanol + a ubiquinone = a ubiquinol + acetaldehyde. Functionally, cytochrome c component of the alcohol dehydrogenase multicomponent enzyme system which is involved in the production of acetic acid and in the ethanol oxidase respiratory chain. Quinohemoprotein alcohol dehydrogenase (ADH) catalyzes the oxidation of ethanol to acetaldehyde by transferring electrons to the ubiquinone embedded in the membrane phospholipids. The electrons transfer from ethanol to membranous ubiquinone occurs from pyrroloquinoline quinone (PQQ) to one heme c in subunit I (AdhA), and finally to two heme c in subunit II (AdhB). Besides ubiquinone reduction, ADH also has a ubiquinol (QH2) oxidation reaction which mediates electron transfer from ubiquinol to the non-energy generating bypass oxidase system. The electrons transfer occurs from ubiquinol (QH2) to the additional heme c within subunit II (AdhB). This is Alcohol dehydrogenase (quinone), cytochrome c subunit from Gluconacetobacter polyoxogenes (Acetobacter polyoxogenes).